The primary structure comprises 504 residues: MEELRGYLELDRSWQRDFLYTLILQEYIYSLAHDHGFNRTIFLENAGYEKKYSFLIVKRLITRMYQQNHLILSANDSNQNEFWGQKKNLYYQVISEGFAFIVEIPFSLQLLFSLEGKEIVKSRNLRSIHSIFPFLEDKFSHLNYVLDILIPHPVHLEILVQTIRYWTKDASSLHLLRFFLYEYRNWNSRISIKQYISFFSNRNQRLFLFLYNSHVCEYESIFIFLRNQPSHLRSTFSGAFLERIHFYEKMEHLVKVFTKNFQVILWFFKDTFMHYVRYQGKSFVASKGTSLLMIKWKYYLVNFWQCYFSVWSQPRRIYINQLSNHSLDFMGFLSSVRLNPSVVRIQMFEKSFIIDNAINTFDTLVPNIPMIGSFAKEKFCNIFGHPISKPVWADLSDSDIIDRFGRICRSLSHYYSGSSRKKSLYRIKYILRISCARTLARKHKSTVRTFLKRLGSEFLEEFFMEEEKVLSLILPRDSYTSQRFYRGRIWYLDIFCIHDLANHE.

This sequence belongs to the intron maturase 2 family. MatK subfamily.

The protein localises to the plastid. It is found in the chloroplast. Functionally, usually encoded in the trnK tRNA gene intron. Probably assists in splicing its own and other chloroplast group II introns. The chain is Maturase K from Nepenthes gracilis (Slender pitcher plant).